Here is a 118-residue protein sequence, read N- to C-terminus: UPF0342 protein BT9727_0768 (118 aa).

This sequence belongs to the UPF0342 family.

In Bacillus thuringiensis subsp. konkukian (strain 97-27), this protein is UPF0342 protein BT9727_0768.